The following is a 509-amino-acid chain: Maturase K (509 aa).

This sequence belongs to the intron maturase 2 family. MatK subfamily.

Its subcellular location is the plastid. It localises to the chloroplast. Usually encoded in the trnK tRNA gene intron. Probably assists in splicing its own and other chloroplast group II introns. The chain is Maturase K from Drimys granadensis.